Reading from the N-terminus, the 438-residue chain is MRNMVSEISDLSLAKEKSEAQFIARNPKSNDFHCKACDSLPGGNTRTVLHGAPFPIFIEAGYGSKLRDVDGHEYTDFLNELTAGIYGHSNPVIKKALMQGFDEIGISLGGTTTCELNYAEALKSRFLSIEKIRFCNSGTEANITAIIAARKFTGKRAVIAMHGGYHGGPLSFAHGISPYNMDSQDFILCEYNNSTQFKELVNSSQDIAAVIVEAMQGAGGAIPADKEFMQTIQLECEKNDIVFILDEVMTSRLSPGGLQQIYCLKPDLTTLGKYLGGGLPFGAFGGRADIMSCFDPRLPGSLSHSGTFNNDTLTLTAGYVGLTELYTPEAVKRLNALGDGLRKDIESYCHNTKMSITGLGSIMNIHFTESGRVNSYNDTAGEVIELKDLLWMDLLKEGFWIARRGMITLSLVLTESELEAFKLTIKAWIHRRMSLIRI.

An N6-(pyridoxal phosphate)lysine modification is found at lysine 273.

This sequence belongs to the class-III pyridoxal-phosphate-dependent aminotransferase family. The cofactor is pyridoxal 5'-phosphate.

It localises to the mitochondrion. This is an uncharacterized protein from Schizosaccharomyces pombe (strain 972 / ATCC 24843) (Fission yeast).